A 182-amino-acid chain; its full sequence is Adenine phosphoribosyltransferase (182 aa).

It belongs to the purine/pyrimidine phosphoribosyltransferase family. In terms of assembly, homodimer.

The protein localises to the cytoplasm. It carries out the reaction AMP + diphosphate = 5-phospho-alpha-D-ribose 1-diphosphate + adenine. It functions in the pathway purine metabolism; AMP biosynthesis via salvage pathway; AMP from adenine: step 1/1. Catalyzes a salvage reaction resulting in the formation of AMP, that is energically less costly than de novo synthesis. The protein is Adenine phosphoribosyltransferase of Pseudomonas aeruginosa (strain LESB58).